A 1004-amino-acid chain; its full sequence is Kinesin-like protein KIN-14R (1004 aa).

Disordered stretches follow at residues 1 to 21 (MEEE…RIGD), 61 to 90 (PYVD…MQHD), and 110 to 169 (ELFS…ATMG). The span at 63–75 (VDDDDDGNSEEEN) shows a compositional bias: acidic residues. The span at 115 to 125 (PSPPQGPPSPS) shows a compositional bias: pro residues. 2 coiled-coil regions span residues 189 to 230 (CGQL…AQAS) and 266 to 338 (LNDL…LYNK). The Kinesin motor domain maps to 345–671 (NIRVFCRCRP…LNFASRVRGI (327 aa)). 428–435 (GQTGTGKT) lines the ATP pocket. Residues 691–742 (MAGRAKQDSKNKDAQIKSMEETIQSLEAKNKAKDLLTMNLQEKIKELEAQLL) are a coiled coil. Disordered regions lie at residues 759–791 (DHLH…STAE) and 946–1004 (SGRR…RQLN). A compositionally biased stretch (low complexity) spans 948–958 (RRAGAGVAGTT). A compositionally biased stretch (polar residues) spans 995–1004 (NNGTSLRQLN).

The protein belongs to the TRAFAC class myosin-kinesin ATPase superfamily. Kinesin family. KIN-14 subfamily.

In Oryza sativa subsp. japonica (Rice), this protein is Kinesin-like protein KIN-14R.